Reading from the N-terminus, the 396-residue chain is S-adenosylmethionine synthase (396 aa).

Mg(2+) is bound at residue E12. H18 contributes to the ATP binding site. A K(+)-binding site is contributed by E46. 2 residues coordinate L-methionine: E59 and Q102. ATP is bound by residues 170-172, 238-241, D249, 255-256, A272, K276, and K280; these read DGK, SGRF, and RK. D249 contacts L-methionine. Residue K280 participates in L-methionine binding.

The protein belongs to the AdoMet synthase family. As to quaternary structure, homotetramer. The cofactor is Mn(2+). Requires Mg(2+) as cofactor. Co(2+) is required as a cofactor. K(+) serves as cofactor.

It is found in the cytoplasm. It catalyses the reaction L-methionine + ATP + H2O = S-adenosyl-L-methionine + phosphate + diphosphate. Its pathway is amino-acid biosynthesis; S-adenosyl-L-methionine biosynthesis; S-adenosyl-L-methionine from L-methionine: step 1/1. In terms of biological role, catalyzes the formation of S-adenosylmethionine from methionine and ATP. The reaction comprises two steps that are both catalyzed by the same enzyme: formation of S-adenosylmethionine (AdoMet) and triphosphate, and subsequent hydrolysis of the triphosphate. This chain is S-adenosylmethionine synthase (SAMS), found in Triticum aestivum (Wheat).